A 1317-amino-acid chain; its full sequence is MYFNNELSGLKDRFLKSLLAQKYPDRINFFLWELKFLDCFLHLQNFAFASECGMLDVSQKMLKNFKRMCATFRSIRPNAGSDNAFAYLKEVICKRLCATLLNTRPDACSDDGFAYWNEVIWKTKQEFRAKYSFPKTPLASNKVDDDDINIHSPKFVMEFIDAVVGNLNVLVKINDPCSLLFVPGPKEQIDQVSKELKLLRFFVCFVSNKCIEPQYGHTTFYIHALIEASHIAMVVWLHLPVYGNGNQDLAPSEVSRLLSDFISRNSNYIDVLKALKSTIPQAQNKHAAESGIVETPTHNLMVGLSDQMVNLQEMLCLLRDNLIHLPILDLEFHLQDMDSVILDAGLLIYSLYDIEGEKEDTVLDDMNRALGFDLPRNIEPIKVMVYLVMQKAFQCNLPRVHGLGYVDFLLKNLNDFQGRYSDSLAFLKNQLQVIQTEFESLQPFLKVVIEEPHNKLKTLNEDCATQIIRKAYEVEYVVDACINKVAPHWCLERWLLDIIEEITCIKAKIQEKNTVEDTMKTVITHTSSQLARTPRMNEEIVGFKDVIENLRNRLLNGTKGQDVISIHGMPGLGKTTLANRLYSDRSVVSHFDICAQCCVSQVYSYKELLLALLCDAVGDDSARRKHNENKLADKLRKTLLSRRYLILVDDVWDNSAWDDLRGCFPDANNRSRIILTTRHHEVAKYASVHSDPLHLRMFDEDESWKLLEKKVFGEKRCSSLLLKDVGLRIAKMCGQLPLSIVLVAGILSEMEKEVECWEQVANNLGTHIHNDSRAIVNQSYHVLPCHLKSCFLYFGAFLEDEVIDISRLIRLWISESFIKSSEGRRLEDIAEGYLENLIGRNLVMVTQRADSDGKVKACRLHDVLLDFCKERAAEENFLLWINRDQISTKAVYSHKQHAHLAFTEMDNLVEWSASCSLVGSVLFKNPDSYLYSPAFSTSLILLNFKFLKVLDLEHQVVIDFIPTELFYLRYLSASIEQNSIPSSISNLWNLETLILKSTPVGRHNTLLLPSTIWDMVKLRHLHIPKFSPENEEALLENSARLYDLETISTPYFSSVEDAELILRKTPNLRKLICEVECLEYPPQYHVLNFPIRLEILKLYRSKAFKTIPFCISAPNLKYLKLSGFYLDSQYLSETVDHLKHLEVLKLCDLEFGDHREWKVSNGMFPQLKILKLEYLSLMKWIVADDAFPNLEQLVLHGCQDLMEIPSCFMDILSLKYIEVDMSNKSVVKSAKNIEETQVEDNQNTNFKLVIIKKMVLKFDIYQNHDKGRLETFKKLVPLPGVKSVRFDMDEKKVTVTGVMDANEVQLVVSKLRKRGML.

2 coiled-coil regions span residues 419–442 (RYSD…ESLQ) and 535–556 (RMNE…RLLN). The NB-ARC domain maps to 521-823 (TVITHTSSQL…SESFIKSSEG (303 aa)). 568–575 (GMPGLGKT) serves as a coordination point for ATP. LRR repeat units lie at residues 944–968 (FKFL…LFYL), 987–1015 (LWNL…IWDM), 1090–1114 (PIRL…ISAP), 1138–1161 (LKHL…KVSN), 1164–1186 (FPQL…ADDA), and 1187–1211 (FPNL…FMDI). Residues 1251 to 1317 (IKKMVLKFDI…VSKLRKRGML (67 aa)) enclose the HMA domain.

It belongs to the disease resistance NB-LRR family.

The protein localises to the cytoplasm. Its subcellular location is the membrane. Functionally, confers resistance to late blight (Phytophthora infestans) races carrying the avirulence gene Avr1. Resistance proteins guard the plant against pathogens that contain an appropriate avirulence protein via an indirect interaction with this avirulence protein. That triggers a defense system including the hypersensitive response, which restricts the pathogen growth. The polypeptide is Putative late blight resistance protein homolog R1B-14 (R1B-14) (Solanum demissum (Wild potato)).